Reading from the N-terminus, the 105-residue chain is MKYHFSSMEPWWKREFSFCIPAIYIKMASISLFQNSWLKMKHLPSCLFTQTTNTLGIYRKKKPNHSRDNPRINSNLSTNYAQAKSVERSRSNSLNSGPNPLENAT.

The segment at 58–105 is disordered; that stretch reads YRKKKPNHSRDNPRINSNLSTNYAQAKSVERSRSNSLNSGPNPLENAT. Composition is skewed to polar residues over residues 71–82 and 91–105; these read RINSNLSTNYAQ and SNSL…ENAT.

The protein resides in the mitochondrion. This is an uncharacterized protein from Arabidopsis thaliana (Mouse-ear cress).